An 862-amino-acid polypeptide reads, in one-letter code: DNA mismatch repair protein MutS (862 aa).

613–620 (GPNMAGKS) is a binding site for ATP.

It belongs to the DNA mismatch repair MutS family.

This protein is involved in the repair of mismatches in DNA. It is possible that it carries out the mismatch recognition step. This protein has a weak ATPase activity. The chain is DNA mismatch repair protein MutS from Desulfitobacterium hafniense (strain Y51).